Reading from the N-terminus, the 335-residue chain is Holliday junction branch migration complex subunit RuvB (335 aa).

The tract at residues 4–184 (ADRIISGQAK…FGIVQRLEFY (181 aa)) is large ATPase domain (RuvB-L). ATP is bound by residues I23, R24, G65, K68, T69, T70, 131-133 (EDY), R174, Y184, and R221. T69 lines the Mg(2+) pocket. The segment at 185–255 (SVEDLTSIVA…VAKQALSMLD (71 aa)) is small ATPAse domain (RuvB-S). A head domain (RuvB-H) region spans residues 258–335 (DAGFDYLDRK…RHFGLQKLSD (78 aa)). DNA-binding residues include R294, R313, and R318.

Belongs to the RuvB family. As to quaternary structure, homohexamer. Forms an RuvA(8)-RuvB(12)-Holliday junction (HJ) complex. HJ DNA is sandwiched between 2 RuvA tetramers; dsDNA enters through RuvA and exits via RuvB. An RuvB hexamer assembles on each DNA strand where it exits the tetramer. Each RuvB hexamer is contacted by two RuvA subunits (via domain III) on 2 adjacent RuvB subunits; this complex drives branch migration. In the full resolvosome a probable DNA-RuvA(4)-RuvB(12)-RuvC(2) complex forms which resolves the HJ.

The protein localises to the cytoplasm. The catalysed reaction is ATP + H2O = ADP + phosphate + H(+). Its function is as follows. The RuvA-RuvB-RuvC complex processes Holliday junction (HJ) DNA during genetic recombination and DNA repair, while the RuvA-RuvB complex plays an important role in the rescue of blocked DNA replication forks via replication fork reversal (RFR). RuvA specifically binds to HJ cruciform DNA, conferring on it an open structure. The RuvB hexamer acts as an ATP-dependent pump, pulling dsDNA into and through the RuvAB complex. RuvB forms 2 homohexamers on either side of HJ DNA bound by 1 or 2 RuvA tetramers; 4 subunits per hexamer contact DNA at a time. Coordinated motions by a converter formed by DNA-disengaged RuvB subunits stimulates ATP hydrolysis and nucleotide exchange. Immobilization of the converter enables RuvB to convert the ATP-contained energy into a lever motion, pulling 2 nucleotides of DNA out of the RuvA tetramer per ATP hydrolyzed, thus driving DNA branch migration. The RuvB motors rotate together with the DNA substrate, which together with the progressing nucleotide cycle form the mechanistic basis for DNA recombination by continuous HJ branch migration. Branch migration allows RuvC to scan DNA until it finds its consensus sequence, where it cleaves and resolves cruciform DNA. This chain is Holliday junction branch migration complex subunit RuvB, found in Haemophilus influenzae (strain PittEE).